Here is a 122-residue protein sequence, read N- to C-terminus: Large ribosomal subunit protein uL14 (122 aa).

Belongs to the universal ribosomal protein uL14 family. In terms of assembly, part of the 50S ribosomal subunit. Forms a cluster with proteins L3 and L19. In the 70S ribosome, L14 and L19 interact and together make contacts with the 16S rRNA in bridges B5 and B8.

In terms of biological role, binds to 23S rRNA. Forms part of two intersubunit bridges in the 70S ribosome. In Thermomicrobium roseum (strain ATCC 27502 / DSM 5159 / P-2), this protein is Large ribosomal subunit protein uL14.